A 267-amino-acid polypeptide reads, in one-letter code: Cell division protein FtsQ (267 aa).

The Cytoplasmic segment spans residues 1-32; that stretch reads MRKKTSSNKKNTAKKNNNISLHRKLGLIYKKT. The helical transmembrane segment at 33-53 threads the bilayer; that stretch reads ILILKIVLIIFICLFAFTKYF. Residues 54–267 lie on the Periplasmic side of the membrane; it reads ASLKSYLKTN…DKNKYYIEKY (214 aa). One can recognise a POTRA domain in the interval 73–141; it reads FKLENVIIEG…STIYIKLFER (69 aa).

It belongs to the FtsQ/DivIB family. FtsQ subfamily.

The protein resides in the cell inner membrane. Essential cell division protein. This chain is Cell division protein FtsQ, found in Rickettsia bellii (strain RML369-C).